The chain runs to 767 residues: Pre-mRNA-splicing factor ATP-dependent RNA helicase PRP43 (767 aa).

The interval 1–74 (MGSKRRFSSE…KLEDGKINPF (74 aa)) is disordered. Phosphoserine occurs at positions 8 and 9. Over residues 58–70 (TSAEEAQKLEDGK) the composition is skewed to basic and acidic residues. The Helicase ATP-binding domain maps to 103–268 (LKLYQNNQIM…FNDAPLLAVP (166 aa)). An ATP-binding site is contributed by 116 to 123 (GETGSGKT). The short motif at 215–218 (DEAH) is the DEAH box element. Positions 293–473 (TVLQIHATEE…STVLELKKLG (181 aa)) constitute a Helicase C-terminal domain.

It belongs to the DEAD box helicase family. DEAH subfamily. DDX15/PRP43 sub-subfamily. In terms of assembly, component of the NTR complex (NTC-related complex), composed of NTR1, NTR2 and PRP43. Interacts with NTR1 and NTR2. Interacts with SPP382.

The protein localises to the nucleus. It catalyses the reaction ATP + H2O = ADP + phosphate + H(+). In terms of biological role, pre-mRNA processing factor involved in disassembly of spliceosomes after the release of mature mRNA. This is Pre-mRNA-splicing factor ATP-dependent RNA helicase PRP43 (PRP43) from Saccharomyces cerevisiae (strain ATCC 204508 / S288c) (Baker's yeast).